Here is a 740-residue protein sequence, read N- to C-terminus: ATP-dependent RNA helicase DDX1 (740 aa).

Positions 1-448 are interaction with dsRNA; that stretch reads MAAFSEMGVM…ETVHHVVVPV (448 aa). Residues 2–428 enclose the Helicase ATP-binding domain; the sequence is AAFSEMGVMP…SEKIMHFPTW (427 aa). 46 to 53 is a binding site for ATP; sequence AETGSGKT. The region spanning 70–247 is the B30.2/SPRY domain; it reads DQQEGKKGKA…LKFNFGEEDF (178 aa). A DEAD box motif is present at residues 370 to 373; that stretch reads DEAD. Residues 493–681 form the Helicase C-terminal domain; sequence KGEYIVRAIK…QVEPDIKVPL (189 aa).

This sequence belongs to the DEAD box helicase family. DDX1 subfamily.

Its subcellular location is the nucleus. It localises to the cytoplasm. It is found in the cytoplasmic granule. The protein localises to the cytosol. The protein resides in the mitochondrion. The enzyme catalyses ATP + H2O = ADP + phosphate + H(+). In terms of biological role, acts as an ATP-dependent RNA helicase, able to unwind both RNA-RNA and RNA-DNA duplexes. Possesses 5' single-stranded RNA overhang nuclease activity. Acts as a positive regulator of transcription. May be involved in 3'-end cleavage and polyadenylation of pre-mRNAs. Binds DNA and RNA. Component of the tRNA-splicing ligase complex required to facilitate the enzymatic turnover of catalytic subunit rtcb. Binds (via helicase ATP-binding domain) on both short and long poly(I:C) dsRNA. The sequence is that of ATP-dependent RNA helicase DDX1 (ddx1) from Xenopus laevis (African clawed frog).